Here is a 1345-residue protein sequence, read N- to C-terminus: Aldehyde oxidase 2 (1345 aa).

One can recognise a 2Fe-2S ferredoxin-type domain in the interval 9–96 (DELEFFVNGK…GAAVTTVEGV (88 aa)). Cys-48, Cys-53, Cys-56, and Cys-78 together coordinate [2Fe-2S] cluster. Residue Gln-117 coordinates Mo-molybdopterin. [2Fe-2S] cluster is bound by residues Cys-118, Cys-121, Cys-153, and Cys-155. Cys-155 contributes to the Mo-molybdopterin binding site. The FAD-binding PCMH-type domain occupies 238–423 (FYGERITWIA…GSVYIPHSQK (186 aa)). FAD is bound by residues 266-273 (LISGNTAL), Ala-347, Ser-356, His-360, Asp-369, and Leu-413. Residues 812–813 (GF), 1094–1097 (ASVG), Gln-1209, and Leu-1274 each bind Mo-molybdopterin. Glu-1276 serves as the catalytic Proton acceptor; for azaheterocycle hydroxylase activity.

Belongs to the xanthine dehydrogenase family. In terms of assembly, homodimer. [2Fe-2S] cluster serves as cofactor. FAD is required as a cofactor. The cofactor is Mo-molybdopterin.

The protein resides in the cytoplasm. It carries out the reaction an aldehyde + O2 + H2O = a carboxylate + H2O2 + H(+). Its function is as follows. Oxidase with broad substrate specificity, oxidizing aromatic azaheterocycles, such as phthalazine, as well as aldehydes, such as benzaldehyde and retinal. In Rattus norvegicus (Rat), this protein is Aldehyde oxidase 2 (Aox2).